The chain runs to 151 residues: Prefoldin subunit alpha (151 aa).

It belongs to the prefoldin subunit alpha family. As to quaternary structure, heterohexamer of two alpha and four beta subunits.

It localises to the cytoplasm. Functionally, molecular chaperone capable of stabilizing a range of proteins. Seems to fulfill an ATP-independent, HSP70-like function in archaeal de novo protein folding. This Aeropyrum pernix (strain ATCC 700893 / DSM 11879 / JCM 9820 / NBRC 100138 / K1) protein is Prefoldin subunit alpha (pfdA).